Consider the following 268-residue polypeptide: Tryptophan synthase alpha chain (268 aa).

Catalysis depends on proton acceptor residues Glu-49 and Asp-60.

The protein belongs to the TrpA family. In terms of assembly, tetramer of two alpha and two beta chains.

The catalysed reaction is (1S,2R)-1-C-(indol-3-yl)glycerol 3-phosphate + L-serine = D-glyceraldehyde 3-phosphate + L-tryptophan + H2O. It participates in amino-acid biosynthesis; L-tryptophan biosynthesis; L-tryptophan from chorismate: step 5/5. In terms of biological role, the alpha subunit is responsible for the aldol cleavage of indoleglycerol phosphate to indole and glyceraldehyde 3-phosphate. The protein is Tryptophan synthase alpha chain of Pseudomonas aeruginosa (strain LESB58).